We begin with the raw amino-acid sequence, 216 residues long: Holliday junction branch migration complex subunit RuvA (216 aa).

Residues 1 to 64 form a domain I region; it reads MISFIKGVLI…EDAQQLYGFK (64 aa). The segment at 65-143 is domain II; it reads SKVDKKVFQE…KMANEIYAQT (79 aa). Residues 144–163 form a flexible linker region; the sequence is SGTTTTSQDSQAQQAPTSAV. Positions 164–216 are domain III; the sequence is LANSIFNESVDALLALGYKQKDAEKMSRSAMGDATTAAEVIRKALQGSIRSKR.

It belongs to the RuvA family. In terms of assembly, homotetramer. Forms an RuvA(8)-RuvB(12)-Holliday junction (HJ) complex. HJ DNA is sandwiched between 2 RuvA tetramers; dsDNA enters through RuvA and exits via RuvB. An RuvB hexamer assembles on each DNA strand where it exits the tetramer. Each RuvB hexamer is contacted by two RuvA subunits (via domain III) on 2 adjacent RuvB subunits; this complex drives branch migration. In the full resolvosome a probable DNA-RuvA(4)-RuvB(12)-RuvC(2) complex forms which resolves the HJ.

The protein resides in the cytoplasm. Its function is as follows. The RuvA-RuvB-RuvC complex processes Holliday junction (HJ) DNA during genetic recombination and DNA repair, while the RuvA-RuvB complex plays an important role in the rescue of blocked DNA replication forks via replication fork reversal (RFR). RuvA specifically binds to HJ cruciform DNA, conferring on it an open structure. The RuvB hexamer acts as an ATP-dependent pump, pulling dsDNA into and through the RuvAB complex. HJ branch migration allows RuvC to scan DNA until it finds its consensus sequence, where it cleaves and resolves the cruciform DNA. The sequence is that of Holliday junction branch migration complex subunit RuvA from Francisella tularensis subsp. novicida (strain U112).